Here is a 423-residue protein sequence, read N- to C-terminus: p-aminobenzoyl-glutamate hydrolase subunit A homolog (423 aa).

The protein belongs to the peptidase M20 family. The cofactor is Mn(2+).

Its function is as follows. Catalyzes the cleavage of p-aminobenzoyl-glutamate (PABA-GLU) to form p-aminobenzoate (PABA) and glutamate. The protein is p-aminobenzoyl-glutamate hydrolase subunit A homolog (abgA) of Haemophilus influenzae (strain ATCC 51907 / DSM 11121 / KW20 / Rd).